Consider the following 448-residue polypeptide: Phosphohexose mutases (448 aa).

Ser97 (phosphoserine intermediate) is an active-site residue. Mg(2+) contacts are provided by Ser97, Asp237, Asp239, and Asp241.

The protein belongs to the phosphohexose mutase family. It depends on Mg(2+) as a cofactor.

The enzyme catalyses alpha-D-glucose 1-phosphate = alpha-D-glucose 6-phosphate. It catalyses the reaction alpha-D-mannose 1-phosphate = D-mannose 6-phosphate. It participates in nucleotide-sugar biosynthesis; GDP-alpha-D-mannose biosynthesis; alpha-D-mannose 1-phosphate from D-fructose 6-phosphate: step 2/2. Functionally, involved in xanthan production. This chain is Phosphohexose mutases (xanA), found in Xanthomonas campestris pv. campestris (strain B100).